The following is a 992-amino-acid chain: Vacuolar membrane protease (992 aa).

Over 1–24 (MSPAMANPRVRKFNPIAFTPLPVT) the chain is Cytoplasmic. A helical membrane pass occupies residues 25-45 (FITTIVYLAVLILVLVTYLVV). Residues 46-390 (PPAPTLEMSP…SAFAVFRLHT (345 aa)) are Vacuolar-facing. 3 N-linked (GlcNAc...) asparagine glycosylation sites follow: N59, N115, and N118. Residues H174 and D186 each coordinate Zn(2+). E220 acts as the Proton acceptor in catalysis. Position 221 (E221) interacts with Zn(2+). Residue N237 is glycosylated (N-linked (GlcNAc...) asparagine). Zn(2+) contacts are provided by E246 and H319. The chain crosses the membrane as a helical span at residues 391–411 (LFALSVTLLVIGPLVLFITSI). Residues 412–446 (ALSKTDRMYLFSMSKSLGGASETVSLRGLRGLFRT) lie on the Cytoplasmic side of the membrane. Residues 447-467 (PIILTVTTVIPIGLAYLLEKI) form a helical membrane-spanning segment. Over 468–474 (NPYIVHS) the chain is Vacuolar. The helical transmembrane segment at 475–495 (SQFAVWSMMLSVWIFVAWFLA) threads the bilayer. At 496–508 (RVADFFRPSALHR) the chain is on the cytoplasmic side. A helical membrane pass occupies residues 509–529 (AYSYTWIFIVTWIMLVISTVY). Over 530–533 (ANQK) the chain is Vacuolar. A helical transmembrane segment spans residues 534–554 (GIAAGYFTFFYFAAVFLATWV). The Cytoplasmic portion of the chain corresponds to 555–671 (SYLELFSLPR…WSWTLPRWTW (117 aa)). The tract at residues 579–620 (RSSSLSSRLLTPSADELPSDIGPNGAENVGDPDETDPTESTS) is disordered. A helical membrane pass occupies residues 672-692 (ILQLLLLAPIVIILVGQVGLL). Residues 693–708 (LTTAMSQIGSDGVSTF) lie on the Vacuolar side of the membrane. A helical membrane pass occupies residues 709–729 (IVYLACALFSTLLFAPLLPFI). The Cytoplasmic portion of the chain corresponds to 730 to 736 (HRFTYHV). Residues 737-757 (PTFLLLIFIGTLIYNLVAFPF) traverse the membrane as a helical segment. Over 758-992 (SPANRLKIFF…VEASHDFIIQ (235 aa)) the chain is Vacuolar. N-linked (GlcNAc...) asparagine glycosylation is found at N805, N846, and N954.

This sequence belongs to the peptidase M28 family. The cofactor is Zn(2+).

The protein resides in the vacuole membrane. Its function is as follows. May be involved in vacuolar sorting and osmoregulation. This Paracoccidioides brasiliensis (strain Pb03) protein is Vacuolar membrane protease.